The primary structure comprises 246 residues: Small ribosomal subunit protein uS2 (246 aa).

Belongs to the universal ribosomal protein uS2 family.

The chain is Small ribosomal subunit protein uS2 from Burkholderia thailandensis (strain ATCC 700388 / DSM 13276 / CCUG 48851 / CIP 106301 / E264).